We begin with the raw amino-acid sequence, 763 residues long: Putative alpha-1,3-mannosyltransferase MNN15 (763 aa).

At 1 to 7 (MRFTLKK) the chain is on the cytoplasmic side. A helical transmembrane segment spans residues 8 to 28 (IFFVFLTLLIISIGYLLLQSV). Residues 29 to 763 (DLQRIRELLH…KDATTVRLRI (735 aa)) lie on the Lumenal side of the membrane. N-linked (GlcNAc...) asparagine glycans are attached at residues N71, N157, and N169. The disordered stretch occupies residues 617 to 659 (LVPPDLPNQREPGSPPDTKPEMEFRKSWKSRKKDTDEINEKLP). Basic and acidic residues predominate over residues 649-659 (KDTDEINEKLP).

This sequence belongs to the MNN1/MNT family.

It localises to the golgi apparatus membrane. It functions in the pathway protein modification; protein glycosylation. Functionally, responsible for addition of the terminal mannose residues to the outer chain of core N-linked polysaccharides and to O-linked mannotriose. Implicated in late Golgi modifications. The chain is Putative alpha-1,3-mannosyltransferase MNN15 (MNN15) from Candida albicans (strain SC5314 / ATCC MYA-2876) (Yeast).